Consider the following 104-residue polypeptide: V-type ATP synthase subunit F (104 aa).

It belongs to the V-ATPase F subunit family.

Functionally, produces ATP from ADP in the presence of a proton gradient across the membrane. This chain is V-type ATP synthase subunit F (atpF), found in Thermus thermophilus (strain ATCC 27634 / DSM 579 / HB8).